Reading from the N-terminus, the 210-residue chain is Thymidylate kinase (210 aa).

Position 10-17 (10-17 (GPEGAGKS)) interacts with ATP.

Belongs to the thymidylate kinase family.

The enzyme catalyses dTMP + ATP = dTDP + ADP. Functionally, phosphorylation of dTMP to form dTDP in both de novo and salvage pathways of dTTP synthesis. This chain is Thymidylate kinase, found in Pseudomonas fluorescens (strain Pf0-1).